Reading from the N-terminus, the 356-residue chain is S-adenosylmethionine:tRNA ribosyltransferase-isomerase (356 aa).

This sequence belongs to the QueA family. As to quaternary structure, monomer.

It localises to the cytoplasm. It catalyses the reaction 7-aminomethyl-7-carbaguanosine(34) in tRNA + S-adenosyl-L-methionine = epoxyqueuosine(34) in tRNA + adenine + L-methionine + 2 H(+). It participates in tRNA modification; tRNA-queuosine biosynthesis. Functionally, transfers and isomerizes the ribose moiety from AdoMet to the 7-aminomethyl group of 7-deazaguanine (preQ1-tRNA) to give epoxyqueuosine (oQ-tRNA). In Shigella boydii serotype 18 (strain CDC 3083-94 / BS512), this protein is S-adenosylmethionine:tRNA ribosyltransferase-isomerase.